We begin with the raw amino-acid sequence, 200 residues long: 3-isopropylmalate dehydratase small subunit (200 aa).

Belongs to the LeuD family. LeuD type 1 subfamily. In terms of assembly, heterodimer of LeuC and LeuD.

It catalyses the reaction (2R,3S)-3-isopropylmalate = (2S)-2-isopropylmalate. The protein operates within amino-acid biosynthesis; L-leucine biosynthesis; L-leucine from 3-methyl-2-oxobutanoate: step 2/4. Catalyzes the isomerization between 2-isopropylmalate and 3-isopropylmalate, via the formation of 2-isopropylmaleate. The protein is 3-isopropylmalate dehydratase small subunit of Vibrio vulnificus (strain YJ016).